The sequence spans 195 residues: Adenylate kinase (195 aa).

Position 11 to 16 (11 to 16 (GAGKGT)) interacts with ATP. The segment at 31-60 (STGDIFRAAVRNQTPLGQQVQAYLDSGRLV) is NMP. AMP-binding positions include T32, R37, 58–60 (RLV), 86–89 (GFPR), and Q93. The tract at residues 127-137 (LRAEKESRKDD) is LID. Residue R128 coordinates ATP. Residues R134 and R145 each coordinate AMP. Residue Q173 coordinates ATP.

The protein belongs to the adenylate kinase family. In terms of assembly, monomer.

The protein localises to the cytoplasm. The catalysed reaction is AMP + ATP = 2 ADP. The protein operates within purine metabolism; AMP biosynthesis via salvage pathway; AMP from ADP: step 1/1. Functionally, catalyzes the reversible transfer of the terminal phosphate group between ATP and AMP. Plays an important role in cellular energy homeostasis and in adenine nucleotide metabolism. This chain is Adenylate kinase, found in Cyanothece sp. (strain PCC 7425 / ATCC 29141).